Here is a 311-residue protein sequence, read N- to C-terminus: Olfactory receptor-like protein OLF1 (311 aa).

Topologically, residues 1–24 (MDGNYTLVTEFILLGFPTRPELQI) are extracellular. Asn-4 is a glycosylation site (N-linked (GlcNAc...) asparagine). Residues 25–48 (VLFLVFLTLYGIILTGNIGLMMLI) traverse the membrane as a helical segment. Over 49–56 (RTDPHLQT) the chain is Cytoplasmic. The chain crosses the membrane as a helical span at residues 57–78 (PMYFFLSNLSFADLCFSSAIVP). Residues 79 to 99 (KMLVNFLSENKSISLYGCALQ) are Extracellular-facing. Residues 100 to 119 (FYFSCAFADTESFILAAMAY) traverse the membrane as a helical segment. At 120 to 138 (DRYVAICNPLLYTVVMSRG) the chain is on the cytoplasmic side. A helical transmembrane segment spans residues 139–157 (ICVWLIVLSYIGGNMSSLV). Residues 158–195 (HTSFAFILKYCDKNVINHFFCDLPPLLKLSCTDTSVNE) lie on the Extracellular side of the membrane. Residues 196–218 (WLLSTYGSSVEIFCFIVIVISYY) form a helical membrane-spanning segment. Residues 219 to 235 (FILRSVLRIRSSSGRKK) are Cytoplasmic-facing. The helical transmembrane segment at 236 to 259 (TFSTCASHLTSVAIYQGTLLFIYS) threads the bilayer. Residues 260-271 (RPTYLYTPNTDK) are Extracellular-facing. A helical transmembrane segment spans residues 272–291 (IISVFYTIIIPVLNPLIYSL). Residues 292–311 (RNKDVKDAAKRAVRLKVDSS) are Cytoplasmic-facing.

The protein belongs to the G-protein coupled receptor 1 family.

The protein localises to the cell membrane. Functionally, putative odorant or sperm cell receptor. The chain is Olfactory receptor-like protein OLF1 from Canis lupus familiaris (Dog).